The chain runs to 415 residues: Esterase FrsA (415 aa).

Residues 1–23 (MANRNLSESLFKPRQKHQETSTL) form a disordered region.

The protein belongs to the FrsA family.

It carries out the reaction a carboxylic ester + H2O = an alcohol + a carboxylate + H(+). Catalyzes the hydrolysis of esters. The sequence is that of Esterase FrsA from Photorhabdus laumondii subsp. laumondii (strain DSM 15139 / CIP 105565 / TT01) (Photorhabdus luminescens subsp. laumondii).